We begin with the raw amino-acid sequence, 401 residues long: Imidazolonepropionase (401 aa).

Fe(3+)-binding residues include His66 and His68. Positions 66 and 68 each coordinate Zn(2+). Residues Arg75, Tyr138, and His171 each contribute to the 4-imidazolone-5-propanoate site. N-formimidoyl-L-glutamate is bound at residue Tyr138. Residue His236 participates in Fe(3+) binding. His236 contributes to the Zn(2+) binding site. Gln239 is a binding site for 4-imidazolone-5-propanoate. Asp311 contacts Fe(3+). Asp311 is a Zn(2+) binding site. 2 residues coordinate N-formimidoyl-L-glutamate: Asn313 and Gly315. Thr316 is a 4-imidazolone-5-propanoate binding site.

The protein belongs to the metallo-dependent hydrolases superfamily. HutI family. Requires Zn(2+) as cofactor. Fe(3+) is required as a cofactor.

The protein resides in the cytoplasm. It catalyses the reaction 4-imidazolone-5-propanoate + H2O = N-formimidoyl-L-glutamate. It functions in the pathway amino-acid degradation; L-histidine degradation into L-glutamate; N-formimidoyl-L-glutamate from L-histidine: step 3/3. Catalyzes the hydrolytic cleavage of the carbon-nitrogen bond in imidazolone-5-propanoate to yield N-formimidoyl-L-glutamate. It is the third step in the universal histidine degradation pathway. This is Imidazolonepropionase from Acinetobacter baumannii (strain ATCC 17978 / DSM 105126 / CIP 53.77 / LMG 1025 / NCDC KC755 / 5377).